Reading from the N-terminus, the 120-residue chain is MWGYIHLISWVAIVVLTVTALLIYSKSTKSFTMLQMINRVFYILVILSGIMMVKYSIEQSWILAIFKILMGIIVIGVVEMLLSYRKQQKPTGMFLMIFVIVVVITISLGFYLSGGYPLFN.

4 helical membrane passes run 3–23 (GYIHLISWVAIVVLTVTALLI), 33–53 (MLQMINRVFYILVILSGIMMV), 62–82 (ILAIFKILMGIIVIGVVEMLL), and 92–112 (GMFLMIFVIVVVITISLGFYL).

The protein belongs to the UPF0344 family.

It is found in the cell membrane. This Listeria monocytogenes serotype 4b (strain F2365) protein is UPF0344 protein LMOf2365_2298.